An 81-amino-acid chain; its full sequence is Short neurotoxin 1 (81 aa).

An N-terminal signal peptide occupies residues 1-21; the sequence is MKTLLLSPVVVTIVCLDLGYT. 4 disulfide bridges follow: cysteine 24-cysteine 43, cysteine 38-cysteine 60, cysteine 62-cysteine 73, and cysteine 74-cysteine 79.

It belongs to the three-finger toxin family. Short-chain subfamily. Type I alpha-neurotoxin sub-subfamily. As to expression, expressed by the venom gland.

The protein resides in the secreted. Binds to muscle nicotinic acetylcholine receptor (nAChR) and inhibit acetylcholine from binding to the receptor, thereby impairing neuromuscular transmission. This is Short neurotoxin 1 from Hydrophis peronii (Spiny-headed seasnake).